The chain runs to 129 residues: Small ribosomal subunit protein uS11 (129 aa).

The protein belongs to the universal ribosomal protein uS11 family. In terms of assembly, part of the 30S ribosomal subunit.

Its function is as follows. Located on the platform of the 30S subunit. In Methanocaldococcus jannaschii (strain ATCC 43067 / DSM 2661 / JAL-1 / JCM 10045 / NBRC 100440) (Methanococcus jannaschii), this protein is Small ribosomal subunit protein uS11.